The following is a 359-amino-acid chain: Peptide methionine sulfoxide reductase MsrA/MsrB (359 aa).

The segment at 36–189 is peptide methionine sulfoxide reductase A; the sequence is RVIYLAGGCF…PSGYCHIDLK (154 aa). Cys44 is an active-site residue. The 124-residue stretch at 206-329 folds into the MsrB domain; that stretch reads DEVLKKKLTK…NSAALRFIPL (124 aa). Cys318 (nucleophile) is an active-site residue.

In the N-terminal section; belongs to the MsrA Met sulfoxide reductase family. The protein in the C-terminal section; belongs to the MsrB Met sulfoxide reductase family.

The catalysed reaction is L-methionyl-[protein] + [thioredoxin]-disulfide + H2O = L-methionyl-(S)-S-oxide-[protein] + [thioredoxin]-dithiol. The enzyme catalyses [thioredoxin]-disulfide + L-methionine + H2O = L-methionine (S)-S-oxide + [thioredoxin]-dithiol. It catalyses the reaction L-methionyl-[protein] + [thioredoxin]-disulfide + H2O = L-methionyl-(R)-S-oxide-[protein] + [thioredoxin]-dithiol. In terms of biological role, has an important function as a repair enzyme for proteins that have been inactivated by oxidation. Catalyzes the reversible oxidation-reduction of methionine sulfoxide in proteins to methionine. The chain is Peptide methionine sulfoxide reductase MsrA/MsrB (msrAB) from Helicobacter pylori (strain ATCC 700392 / 26695) (Campylobacter pylori).